A 285-amino-acid polypeptide reads, in one-letter code: G patch domain-containing protein 11 (285 aa).

A coiled-coil region spans residues 51–87 (MLRQIREARRKEEKQQEANLKNRQKSLKEEEQERRDI). The disordered stretch occupies residues 59–84 (RRKEEKQQEANLKNRQKSLKEEEQER). The region spanning 95 to 141 (CENKGFALLQKMGYKSGQALGKSGGGIVEPIPLNIKTGKSGIGHEAS) is the G-patch domain. The residue at position 141 (Ser141) is a Phosphoserine. An N6-acetyllysine modification is found at Lys149. Positions 218–235 (EETEEDEEEKEQDEDEYK) are enriched in acidic residues. Residues 218–237 (EETEEDEEEKEQDEDEYKSE) are disordered.

Belongs to the GPATCH11 family.

The protein localises to the chromosome. The protein resides in the centromere. Its subcellular location is the kinetochore. This Homo sapiens (Human) protein is G patch domain-containing protein 11 (GPATCH11).